The following is a 322-amino-acid chain: Protein prune homolog 2 (322 aa).

Residues 1-110 (MDIHFEEGVL…SIPEYTAEEE (110 aa)) form a disordered region. The span at 40–52 (PNINLSLDQSEGS) shows a compositional bias: polar residues. Over residues 57–80 (DNLDSPDEIDINVDELDTPDEADS) the composition is skewed to acidic residues. The CRAL-TRIO domain occupies 130–291 (DMKVIEPYRR…SIIKYDEEKS (162 aa)).

Its subcellular location is the cytoplasm. May play an important role in regulating differentiation, survival and aggressiveness of the tumor cells. This is Protein prune homolog 2 (Prune2) from Rattus norvegicus (Rat).